Consider the following 105-residue polypeptide: Small ribosomal subunit protein uS10 (105 aa).

The protein belongs to the universal ribosomal protein uS10 family. Part of the 30S ribosomal subunit.

Functionally, involved in the binding of tRNA to the ribosomes. The chain is Small ribosomal subunit protein uS10 from Francisella tularensis subsp. mediasiatica (strain FSC147).